The primary structure comprises 208 residues: 2-phospho-L-lactate guanylyltransferase (208 aa).

The protein belongs to the CofC family. Homodimer.

It carries out the reaction (2S)-2-phospholactate + GTP + H(+) = (2S)-lactyl-2-diphospho-5'-guanosine + diphosphate. It participates in cofactor biosynthesis; coenzyme F420 biosynthesis. In terms of biological role, guanylyltransferase that catalyzes the activation of (2S)-2-phospholactate (2-PL) as (2S)-lactyl-2-diphospho-5'-guanosine, via the condensation of 2-PL with GTP. It is involved in the biosynthesis of coenzyme F420, a hydride carrier cofactor. The sequence is that of 2-phospho-L-lactate guanylyltransferase from Methanosarcina mazei (strain ATCC BAA-159 / DSM 3647 / Goe1 / Go1 / JCM 11833 / OCM 88) (Methanosarcina frisia).